The sequence spans 576 residues: Peptidoglycan D,D-transpeptidase FtsI (576 aa).

A helical membrane pass occupies residues 22-42 (ITILLSLIIITIILVLSRITF). Residue Ser-308 is the Acyl-ester intermediate of the active site.

It belongs to the transpeptidase family. FtsI subfamily.

It localises to the cell inner membrane. The catalysed reaction is Preferential cleavage: (Ac)2-L-Lys-D-Ala-|-D-Ala. Also transpeptidation of peptidyl-alanyl moieties that are N-acyl substituents of D-alanine.. It participates in cell wall biogenesis; peptidoglycan biosynthesis. In terms of biological role, catalyzes cross-linking of the peptidoglycan cell wall at the division septum. The protein is Peptidoglycan D,D-transpeptidase FtsI of Buchnera aphidicola subsp. Baizongia pistaciae (strain Bp).